The primary structure comprises 505 residues: RNA-splicing ligase RtcB homolog (505 aa).

Residues aspartate 119, cysteine 122, histidine 227, and histidine 259 each coordinate Mn(2+). Residue 226 to 230 (NHYAE) participates in GMP binding. Serine 300 bears the Phosphoserine mark. Histidine 353 contributes to the Mn(2+) binding site. GMP contacts are provided by residues 353–354 (HN), 402–405 (GGTM), serine 409, and 428–431 (HGAG). Catalysis depends on histidine 428, which acts as the GMP-histidine intermediate. Lysine 496 participates in a covalent cross-link: Glycyl lysine isopeptide (Lys-Gly) (interchain with G-Cter in SUMO2). Lysine 504 contributes to the GMP binding site.

It belongs to the RtcB family. Catalytic component of the tRNA-splicing ligase complex. Mn(2+) serves as cofactor.

It is found in the nucleus. It localises to the cytoplasm. The catalysed reaction is a 3'-end 3'-phospho-ribonucleotide-RNA + a 5'-end dephospho-ribonucleoside-RNA + GTP = a ribonucleotidyl-ribonucleotide-RNA + GMP + diphosphate. The enzyme catalyses a 3'-end 2',3'-cyclophospho-ribonucleotide-RNA + a 5'-end dephospho-ribonucleoside-RNA + GTP + H2O = a ribonucleotidyl-ribonucleotide-RNA + GMP + diphosphate + H(+). Functionally, catalytic subunit of the tRNA-splicing ligase complex that acts by directly joining spliced tRNA halves to mature-sized tRNAs by incorporating the precursor-derived splice junction phosphate into the mature tRNA as a canonical 3',5'-phosphodiester. May act as an RNA ligase with broad substrate specificity, and may function toward other RNAs. This Sus scrofa (Pig) protein is RNA-splicing ligase RtcB homolog.